We begin with the raw amino-acid sequence, 189 residues long: Peptidyl-tRNA hydrolase (189 aa).

Residue Tyr14 participates in tRNA binding. The active-site Proton acceptor is the His19. Residues Tyr64, Asn66, and Asn112 each contribute to the tRNA site.

This sequence belongs to the PTH family. In terms of assembly, monomer.

It localises to the cytoplasm. It carries out the reaction an N-acyl-L-alpha-aminoacyl-tRNA + H2O = an N-acyl-L-amino acid + a tRNA + H(+). Functionally, hydrolyzes ribosome-free peptidyl-tRNAs (with 1 or more amino acids incorporated), which drop off the ribosome during protein synthesis, or as a result of ribosome stalling. In terms of biological role, catalyzes the release of premature peptidyl moieties from peptidyl-tRNA molecules trapped in stalled 50S ribosomal subunits, and thus maintains levels of free tRNAs and 50S ribosomes. The polypeptide is Peptidyl-tRNA hydrolase (Clostridium botulinum (strain Langeland / NCTC 10281 / Type F)).